The sequence spans 76 residues: Probable 26S proteasome complex subunit dss-1 (76 aa).

Disordered stretches follow at residues 1 to 28 (MSSTTVTKKDQKTVVEKKETEEEEFEEF) and 52 to 76 (DDETHESEFSKQLKEELRKGGHPIA). Composition is skewed to basic and acidic residues over residues 7–20 (TKKDQKTVVEKKET) and 57–70 (ESEFSKQLKEELRK).

It belongs to the DSS1/SEM1 family. As to quaternary structure, part of the 26S proteasome.

It is found in the nucleus. It localises to the cytoplasm. Subunit of the 26S proteasome which plays a role in ubiquitin-dependent proteolysis. Has an essential role in oogenesis and larval growth. Required for intestinal function and default lifespan. The sequence is that of Probable 26S proteasome complex subunit dss-1 from Caenorhabditis briggsae.